A 270-amino-acid chain; its full sequence is Putative pyruvate, phosphate dikinase regulatory protein (270 aa).

149 to 156 (GVSRTSKT) serves as a coordination point for ADP.

This sequence belongs to the pyruvate, phosphate/water dikinase regulatory protein family. PDRP subfamily.

The catalysed reaction is N(tele)-phospho-L-histidyl/L-threonyl-[pyruvate, phosphate dikinase] + ADP = N(tele)-phospho-L-histidyl/O-phospho-L-threonyl-[pyruvate, phosphate dikinase] + AMP + H(+). It carries out the reaction N(tele)-phospho-L-histidyl/O-phospho-L-threonyl-[pyruvate, phosphate dikinase] + phosphate + H(+) = N(tele)-phospho-L-histidyl/L-threonyl-[pyruvate, phosphate dikinase] + diphosphate. Its function is as follows. Bifunctional serine/threonine kinase and phosphorylase involved in the regulation of the pyruvate, phosphate dikinase (PPDK) by catalyzing its phosphorylation/dephosphorylation. This Thermoanaerobacter pseudethanolicus (strain ATCC 33223 / 39E) (Clostridium thermohydrosulfuricum) protein is Putative pyruvate, phosphate dikinase regulatory protein.